We begin with the raw amino-acid sequence, 837 residues long: Periplasmic nitrate reductase (837 aa).

The tat-type signal signal peptide spans 1 to 31; it reads MKLNRRDFIKANAAAAAISAAGLSVPGAAVA. The 4Fe-4S Mo/W bis-MGD-type domain maps to 37–93; that stretch reads IRWDKAACRFCGTGCGVLVGTQDGRVVATQGDPDAPVNRGLNCIKGYFLSKIMYGAD. [4Fe-4S] cluster-binding residues include Cys-44, Cys-47, Cys-51, and Cys-79. Mo-bis(molybdopterin guanine dinucleotide) contacts are provided by residues Lys-81, Gln-148, Asn-173, Cys-177, 210–217, 241–245, and 260–262; these read WGSNMAEM, STFEH, and QTD. The disordered stretch occupies residues 308 to 329; the sequence is EKNATSNGYPDADGKPKGDTGK. The span at 319–329 shows a compositional bias: basic and acidic residues; sequence ADGKPKGDTGK. Mo-bis(molybdopterin guanine dinucleotide) contacts are provided by residues Met-381, Gln-385, Asn-491, 517–518, Lys-540, Asp-567, and 727–736; these read SD and TGRVLEHWHT. Phe-803 serves as a coordination point for substrate. Mo-bis(molybdopterin guanine dinucleotide) is bound by residues Asn-811 and Lys-828.

This sequence belongs to the prokaryotic molybdopterin-containing oxidoreductase family. NasA/NapA/NarB subfamily. As to quaternary structure, component of the periplasmic nitrate reductase NapAB complex composed of NapA and NapB. [4Fe-4S] cluster is required as a cofactor. It depends on Mo-bis(molybdopterin guanine dinucleotide) as a cofactor. Predicted to be exported by the Tat system. The position of the signal peptide cleavage has not been experimentally proven.

It is found in the periplasm. The enzyme catalyses 2 Fe(II)-[cytochrome] + nitrate + 2 H(+) = 2 Fe(III)-[cytochrome] + nitrite + H2O. Its function is as follows. Catalytic subunit of the periplasmic nitrate reductase complex NapAB. Receives electrons from NapB and catalyzes the reduction of nitrate to nitrite. The chain is Periplasmic nitrate reductase from Dechloromonas aromatica (strain RCB).